We begin with the raw amino-acid sequence, 403 residues long: S-adenosylmethionine synthase (403 aa).

His22 is a binding site for ATP. A Mg(2+)-binding site is contributed by Asp24. Glu50 contributes to the K(+) binding site. The L-methionine site is built by Glu63 and Gln107. Residues 107–117 (QSPDIAMGVDK) are flexible loop. ATP-binding positions include 182–184 (DAK), 248–249 (RF), Asp257, 263–264 (RK), Ala280, and Lys284. Asp257 is an L-methionine binding site. Lys288 provides a ligand contact to L-methionine.

It belongs to the AdoMet synthase family. As to quaternary structure, homotetramer; dimer of dimers. Mg(2+) serves as cofactor. It depends on K(+) as a cofactor.

Its subcellular location is the cytoplasm. The catalysed reaction is L-methionine + ATP + H2O = S-adenosyl-L-methionine + phosphate + diphosphate. It participates in amino-acid biosynthesis; S-adenosyl-L-methionine biosynthesis; S-adenosyl-L-methionine from L-methionine: step 1/1. Functionally, catalyzes the formation of S-adenosylmethionine (AdoMet) from methionine and ATP. The overall synthetic reaction is composed of two sequential steps, AdoMet formation and the subsequent tripolyphosphate hydrolysis which occurs prior to release of AdoMet from the enzyme. This chain is S-adenosylmethionine synthase, found in Chloroflexus aurantiacus (strain ATCC 29366 / DSM 635 / J-10-fl).